The chain runs to 351 residues: uncharacterized protein (351 aa).

Positions 1–27 (MKNKKRVLIASSLSCAILLLSAATTQA) are cleaved as a signal peptide. Positions 28–71 (NSAHKDSQDQNKKEHVDKSQQKDKRNVTNKDKNSTVPDDIGKNG) are disordered. Residues 30–60 (AHKDSQDQNKKEHVDKSQQKDKRNVTNKDKN) are compositionally biased toward basic and acidic residues.

The protein belongs to the aerolysin family.

This is an uncharacterized protein from Staphylococcus aureus (strain N315).